Here is an 88-residue protein sequence, read N- to C-terminus: MIKNSFISFQEKKEENRGSVEFQVLSFTNKIRRLTSHLELHRKDFLSQRGLRKILGKRQRLLAYLSKKNRVRYKELINQLNIRELKTR.

This sequence belongs to the universal ribosomal protein uS15 family. Part of the 30S ribosomal subunit.

It localises to the plastid. It is found in the chloroplast. The sequence is that of Small ribosomal subunit protein uS15c (rps15) from Draba nemorosa (Woodland whitlowgrass).